Here is a 242-residue protein sequence, read N- to C-terminus: HTH-type transcriptional regulator GadW (242 aa).

Positions 139–236 (GKVERLISFD…GVTPHQFSQH (98 aa)) constitute an HTH araC/xylS-type domain. 2 consecutive DNA-binding regions (H-T-H motif) follow at residues 156-177 (RDIA…QDEN) and 203-226 (LHTI…RQYY).

In terms of assembly, homodimer.

In terms of biological role, depending on the conditions (growth phase and medium), acts as a positive or negative regulator of gadA and gadBC. Repression occurs directly or via the repression of the expression of gadX. Activation occurs directly by the binding of GadW to the gadA and gadBC promoters. This Escherichia coli O6:H1 (strain CFT073 / ATCC 700928 / UPEC) protein is HTH-type transcriptional regulator GadW (gadW).